The following is a 334-amino-acid chain: Holliday junction branch migration complex subunit RuvB (334 aa).

Positions 1 to 182 (MDKRMVDQEF…FGVHLRLEYY (182 aa)) are large ATPase domain (RuvB-L). Residues Leu-21, Arg-22, Gly-63, Lys-66, Thr-67, Thr-68, 129–131 (EDF), Arg-172, Tyr-182, and Arg-219 contribute to the ATP site. Mg(2+) is bound at residue Thr-67. A small ATPAse domain (RuvB-S) region spans residues 183 to 253 (NENDLKEIIT…TTKRALQLLQ (71 aa)). A head domain (RuvB-H) region spans residues 256–334 (QHGLDYIDHK…HFNTTNEKRE (79 aa)). Arg-292, Arg-311, and Arg-316 together coordinate DNA.

This sequence belongs to the RuvB family. Homohexamer. Forms an RuvA(8)-RuvB(12)-Holliday junction (HJ) complex. HJ DNA is sandwiched between 2 RuvA tetramers; dsDNA enters through RuvA and exits via RuvB. An RuvB hexamer assembles on each DNA strand where it exits the tetramer. Each RuvB hexamer is contacted by two RuvA subunits (via domain III) on 2 adjacent RuvB subunits; this complex drives branch migration. In the full resolvosome a probable DNA-RuvA(4)-RuvB(12)-RuvC(2) complex forms which resolves the HJ.

The protein resides in the cytoplasm. The catalysed reaction is ATP + H2O = ADP + phosphate + H(+). Functionally, the RuvA-RuvB-RuvC complex processes Holliday junction (HJ) DNA during genetic recombination and DNA repair, while the RuvA-RuvB complex plays an important role in the rescue of blocked DNA replication forks via replication fork reversal (RFR). RuvA specifically binds to HJ cruciform DNA, conferring on it an open structure. The RuvB hexamer acts as an ATP-dependent pump, pulling dsDNA into and through the RuvAB complex. RuvB forms 2 homohexamers on either side of HJ DNA bound by 1 or 2 RuvA tetramers; 4 subunits per hexamer contact DNA at a time. Coordinated motions by a converter formed by DNA-disengaged RuvB subunits stimulates ATP hydrolysis and nucleotide exchange. Immobilization of the converter enables RuvB to convert the ATP-contained energy into a lever motion, pulling 2 nucleotides of DNA out of the RuvA tetramer per ATP hydrolyzed, thus driving DNA branch migration. The RuvB motors rotate together with the DNA substrate, which together with the progressing nucleotide cycle form the mechanistic basis for DNA recombination by continuous HJ branch migration. Branch migration allows RuvC to scan DNA until it finds its consensus sequence, where it cleaves and resolves cruciform DNA. The chain is Holliday junction branch migration complex subunit RuvB from Staphylococcus epidermidis (strain ATCC 35984 / DSM 28319 / BCRC 17069 / CCUG 31568 / BM 3577 / RP62A).